The following is a 45-amino-acid chain: Caltrin-like protein 1 (45 aa).

The Kazal-like domain maps to 8–45; the sequence is DSDRPNCSRYVQHLYMCTKELDPVCGTDGHTYGNRSIF. Residues asparagine 13 and asparagine 41 are each glycosylated (N-linked (GlcNAc...) asparagine).

In terms of processing, glycosylated.

The protein localises to the secreted. Inhibits calcium transport into spermatozoa. The chain is Caltrin-like protein 1 from Cavia porcellus (Guinea pig).